The chain runs to 184 residues: Myeloproliferative leukemia protein (184 aa).

The WSXWS motif signature appears at 26–30 (WSAWS). The helical transmembrane segment at 44-64 (ITLVTALLLVLSLSALLGLLL) threads the bilayer. Positions 80 to 88 (LWPSLPDLH) match the Box 1 motif motif.

Belongs to the type I cytokine receptor family. Type 1 subfamily.

The protein resides in the membrane. In terms of biological role, truncated form of the receptor for thrombopoietin. The polypeptide is Myeloproliferative leukemia protein (V-MPL) (Mus musculus (Mouse)).